A 381-amino-acid chain; its full sequence is MNVFWFLPTHGDGHFLGTSQGARPVSLPYLKQVAQAADSLGYHGVLIPTGRSCEDSWVVASALAPLTERLRFLVAIRPGIVSPTVSARMAATLDRLSGGRLLINVVTGGDPDENRGDGIHLGHAERYEVTDEFLRVWRRVLQGEAVDFHGKHIHVENAKALYPPLQRPYPPLYFGGSSEAAHELAGEQVDVYLTWGEPLPAVAAKIADVRQRAARHGRTVKFGIRLHVIVRETAEEAWRAADRLIEHISDETIAAAQQSFARFDSEGQRRMAALHGGRRDRLEIQPNLWAGVGLVRGGAGTALVGDPRQVAERIGEYAELGIDSFIFSGYPHLEEAYRFAELVFPLLPEPYASLAGRGLTNLTGPFGEMIANDVLPARAGA.

This sequence belongs to the SsuD family.

It carries out the reaction an alkanesulfonate + FMNH2 + O2 = an aldehyde + FMN + sulfite + H2O + 2 H(+). Catalyzes the desulfonation of aliphatic sulfonates. Shows highest activity with methanesulfonate. This is Methanesulfonate monooxygenase (msuD) from Pseudomonas aeruginosa (strain ATCC 15692 / DSM 22644 / CIP 104116 / JCM 14847 / LMG 12228 / 1C / PRS 101 / PAO1).